The following is a 1235-amino-acid chain: Structural maintenance of chromosomes protein 1B (1235 aa).

32 to 39 (GPNGSGKS) contributes to the ATP binding site. Residues 156–490 (EEISTSGELI…RSELQNAGID (335 aa)) adopt a coiled-coil conformation. The region spanning 514–629 (SVFGRLFDLC…ETMEEARHIA (116 aa)) is the SMC hinge domain. 2 positions are modified to N6-acetyllysine: Lys-648 and Lys-713. Coiled-coil stretches lie at residues 666–934 (WDEK…LDCK), 970–994 (EKEE…SDQE), and 1022–1049 (RALE…KEAR). Lys-1033 bears the N6-acetyllysine mark.

This sequence belongs to the SMC family. SMC1 subfamily. In terms of assembly, forms a heterodimer with SMC3. Component of a meiosis-specific cohesin complex, probably composed of the SMC1B and SMC3 heterodimer attached via their SMC hinge domain, RAD21 (or its meiosis-specific related protein REC8), which link them, and STAG3, which interacts with RAD21 or REC8. The cohesin complex interacts with the cohesin loading complex subunits NIPBL/Scc2 (via HEAT repeats) and MAU2/Scc4. NIPBL directly contacts all members of the complex, RAD21, SMC1A/B, SMC3 and STAG1.

The protein localises to the nucleus. The protein resides in the chromosome. Its subcellular location is the centromere. Functionally, meiosis-specific component of cohesin complex. Required for the maintenance of meiotic cohesion, but not, or only to a minor extent, for its establishment. Contributes to axial element (AE) formation and the organization of chromatin loops along the AE. Plays a key role in synapsis, recombination and chromosome movements. The cohesin complex is required for the cohesion of sister chromatids after DNA replication. The cohesin complex apparently forms a large proteinaceous ring within which sister chromatids can be trapped. At anaphase, the complex is cleaved and dissociates from chromatin, allowing sister chromatids to segregate. The meiosis-specific cohesin complex probably replaces mitosis specific cohesin complex when it dissociates from chromatin during prophase I. The chain is Structural maintenance of chromosomes protein 1B (SMC1B) from Homo sapiens (Human).